The sequence spans 265 residues: Probable S-methyl-5'-thioinosine phosphorylase (265 aa).

Phosphate-binding positions include S15 and R55–H56. Substrate is bound at residue M187. T188 contacts phosphate. N211–A213 provides a ligand contact to substrate.

Belongs to the PNP/MTAP phosphorylase family. MTAP subfamily. Homotrimer.

It catalyses the reaction S-methyl-5'-thioinosine + phosphate = 5-(methylsulfanyl)-alpha-D-ribose 1-phosphate + hypoxanthine. The protein operates within purine metabolism; purine nucleoside salvage. Functionally, catalyzes the reversible phosphorylation of S-methyl-5'-thioinosine (MTI) to hypoxanthine and 5-methylthioribose-1-phosphate. Involved in the breakdown of S-methyl-5'-thioadenosine (MTA), a major by-product of polyamine biosynthesis. Catabolism of (MTA) occurs via deamination to MTI and phosphorolysis to hypoxanthine. This is Probable S-methyl-5'-thioinosine phosphorylase from Thermodesulfovibrio yellowstonii (strain ATCC 51303 / DSM 11347 / YP87).